We begin with the raw amino-acid sequence, 70 residues long: Large ribosomal subunit protein eL38 (70 aa).

A Glycyl lysine isopeptide (Lys-Gly) (interchain with G-Cter in SUMO2) cross-link involves residue lysine 4. Lysine 9 bears the N6-acetyllysine; alternate mark. Residue lysine 9 forms a Glycyl lysine isopeptide (Lys-Gly) (interchain with G-Cter in SUMO2); alternate linkage. Residue lysine 67 is modified to N6-acetyllysine.

It belongs to the eukaryotic ribosomal protein eL38 family. In terms of assembly, component of the large ribosomal subunit.

It is found in the cytoplasm. Functionally, component of the large ribosomal subunit. The ribosome is a large ribonucleoprotein complex responsible for the synthesis of proteins in the cell. This is Large ribosomal subunit protein eL38 (RPL38) from Macaca fascicularis (Crab-eating macaque).